The sequence spans 335 residues: Mycobacterial beta-ketoacyl-[acyl-carrier-protein] synthase III (335 aa).

Catalysis depends on residues C122 and H258. Positions 259-263 are ACP-binding; it reads QANSR. N289 is an active-site residue.

The protein belongs to the thiolase-like superfamily. FabH family. In terms of assembly, homodimer.

It localises to the cytoplasm. The enzyme catalyses malonyl-[ACP] + dodecanoyl-CoA + H(+) = 3-oxotetradecanoyl-[ACP] + CO2 + CoA. It functions in the pathway lipid metabolism; fatty acid biosynthesis. Its pathway is lipid metabolism; mycolic acid biosynthesis. Functionally, catalyzes the condensation reaction of fatty acid synthesis by the addition to an acyl acceptor of two carbons from malonyl-ACP. Catalyzes the first condensation reaction which initiates fatty acid synthesis and may therefore play a role in governing the total rate of fatty acid production. Possesses both acetoacetyl-ACP synthase and acetyl transacylase activities. Its substrate specificity determines the biosynthesis of branched-chain and/or straight-chain of fatty acids. The polypeptide is Mycobacterial beta-ketoacyl-[acyl-carrier-protein] synthase III (Mycobacterium ulcerans (strain Agy99)).